Here is a 342-residue protein sequence, read N- to C-terminus: Pyrophosphate--fructose 6-phosphate 1-phosphotransferase (342 aa).

Diphosphate is bound at residue G10. E103 contributes to the Mg(2+) binding site. Substrate-binding positions include 126-128, R163, 170-172, E222, R266, and 272-275; these read TID, MGR, and HVQR. D128 (proton acceptor) is an active-site residue.

Belongs to the phosphofructokinase type A (PFKA) family. Mixed-substrate PFK group III subfamily. As to quaternary structure, homodimer or homotetramer. Mg(2+) is required as a cofactor.

It localises to the cytoplasm. It carries out the reaction beta-D-fructose 6-phosphate + diphosphate = beta-D-fructose 1,6-bisphosphate + phosphate + H(+). It functions in the pathway carbohydrate degradation; glycolysis; D-glyceraldehyde 3-phosphate and glycerone phosphate from D-glucose: step 3/4. Non-allosteric. Catalyzes the phosphorylation of D-fructose 6-phosphate, the first committing step of glycolysis. Uses inorganic phosphate (PPi) as phosphoryl donor instead of ATP like common ATP-dependent phosphofructokinases (ATP-PFKs), which renders the reaction reversible, and can thus function both in glycolysis and gluconeogenesis. Consistently, PPi-PFK can replace the enzymes of both the forward (ATP-PFK) and reverse (fructose-bisphosphatase (FBPase)) reactions. The sequence is that of Pyrophosphate--fructose 6-phosphate 1-phosphotransferase from Streptomyces coelicolor (strain ATCC BAA-471 / A3(2) / M145).